The primary structure comprises 291 residues: 3-hydroxy-5-phosphonooxypentane-2,4-dione thiolase (291 aa).

Lys203 functions as the Schiff-base intermediate with substrate in the catalytic mechanism.

This sequence belongs to the DeoC/FbaB aldolase family. In terms of assembly, homodecamer.

The protein localises to the cytoplasm. It catalyses the reaction dihydroxyacetone phosphate + acetyl-CoA = 3-hydroxy-2,4-dioxopentyl phosphate + CoA. Functionally, involved in the degradation of phospho-AI-2, thereby terminating induction of the lsr operon and closing the AI-2 signaling cycle. Catalyzes the transfer of an acetyl moiety from 3-hydroxy-5-phosphonooxypentane-2,4-dione to CoA to form glycerone phosphate and acetyl-CoA. In Yersinia enterocolitica serotype O:8 / biotype 1B (strain NCTC 13174 / 8081), this protein is 3-hydroxy-5-phosphonooxypentane-2,4-dione thiolase.